The sequence spans 250 residues: Small ribosomal subunit protein uS3 (250 aa).

One can recognise a KH type-2 domain in the interval 39–107; sequence VRAALKKRLY…EVHLNIVEIR (69 aa). The disordered stretch occupies residues 215 to 250; it reads LDKRLATESGPAGEGGGRERGDRPDRGDRRDRRDRA. The segment covering 230-250 has biased composition (basic and acidic residues); sequence GGRERGDRPDRGDRRDRRDRA.

It belongs to the universal ribosomal protein uS3 family. As to quaternary structure, part of the 30S ribosomal subunit. Forms a tight complex with proteins S10 and S14.

Its function is as follows. Binds the lower part of the 30S subunit head. Binds mRNA in the 70S ribosome, positioning it for translation. This is Small ribosomal subunit protein uS3 from Caulobacter vibrioides (strain ATCC 19089 / CIP 103742 / CB 15) (Caulobacter crescentus).